The chain runs to 110 residues: MAEEQPQVELFVKAGSDGAKIGNCPFSQRLFMVLWLKGVTFNVTTVDTKRRTETVQKLCPGGQLPFLLYGTEVHTDTNKIEEFLEAVLCPPRYPKLAALNPESNTAGLDI.

Ala-2 carries the post-translational modification N-acetylalanine. The segment at 2 to 90 (AEEQPQVELF…EEFLEAVLCP (89 aa)) is required for insertion into the membrane. An N6-acetyllysine modification is found at Lys-13. The G-site motif lies at 24–27 (CPFS). A disulfide bridge connects residues Cys-24 and Cys-59. The helical transmembrane segment at 26-46 (FSQRLFMVLWLKGVTFNVTTV) threads the bilayer.

It belongs to the chloride channel CLIC family. In terms of assembly, monomer. Homodimer (in vitro). Interacts with TRAPPC2. Dimerization requires a conformation change that leads to the exposure of a large hydrophobic surface. In vivo, this may lead to membrane insertion.

It localises to the nucleus. The protein resides in the nucleus membrane. Its subcellular location is the cytoplasm. It is found in the cell membrane. The protein localises to the endoplasmic reticulum. The enzyme catalyses L-dehydroascorbate + 2 glutathione = glutathione disulfide + L-ascorbate. It carries out the reaction chloride(in) = chloride(out). The catalysed reaction is iodide(out) = iodide(in). It catalyses the reaction thiocyanate(in) = thiocyanate(out). The enzyme catalyses nitrate(in) = nitrate(out). It carries out the reaction bromide(in) = bromide(out). The catalysed reaction is fluoride(in) = fluoride(out). Functionally, in the soluble state, catalyzes glutaredoxin-like thiol disulfide exchange reactions with reduced glutathione as electron donor. Reduces selenite and dehydroascorbate and may act as an antioxidant during oxidative stress response. Can insert into membranes and form voltage-dependent multi-ion conductive channels. Membrane insertion seems to be redox-regulated and may occur only under oxidizing conditions. Involved in regulation of the cell cycle. This chain is Chloride intracellular channel protein 1 (CLIC1), found in Sus scrofa (Pig).